Consider the following 529-residue polypeptide: Bifunctional purine biosynthesis protein PurH (529 aa).

The region spanning 1 to 148 (MQQRRPVRRA…KNHKDVAIVV (148 aa)) is the MGS-like domain. An N6-acetyllysine modification is found at Lys-287.

This sequence belongs to the PurH family.

It catalyses the reaction (6R)-10-formyltetrahydrofolate + 5-amino-1-(5-phospho-beta-D-ribosyl)imidazole-4-carboxamide = 5-formamido-1-(5-phospho-D-ribosyl)imidazole-4-carboxamide + (6S)-5,6,7,8-tetrahydrofolate. The catalysed reaction is IMP + H2O = 5-formamido-1-(5-phospho-D-ribosyl)imidazole-4-carboxamide. It participates in purine metabolism; IMP biosynthesis via de novo pathway; 5-formamido-1-(5-phospho-D-ribosyl)imidazole-4-carboxamide from 5-amino-1-(5-phospho-D-ribosyl)imidazole-4-carboxamide (10-formyl THF route): step 1/1. The protein operates within purine metabolism; IMP biosynthesis via de novo pathway; IMP from 5-formamido-1-(5-phospho-D-ribosyl)imidazole-4-carboxamide: step 1/1. This Escherichia coli O157:H7 protein is Bifunctional purine biosynthesis protein PurH.